Reading from the N-terminus, the 441-residue chain is tRNA-2-methylthio-N(6)-dimethylallyladenosine synthase (441 aa).

Residues 5-120 (KLLYIETFGC…LPEMVRAAEQ (116 aa)) form the MTTase N-terminal domain. Residues C14, C50, C83, C158, C162, and C165 each contribute to the [4Fe-4S] cluster site. The Radical SAM core domain maps to 144–374 (EGGGVTRFVT…QGLQRDMTIE (231 aa)). Residues 377 to 439 (AGFVGTCQAV…PNSLLGELAV (63 aa)) enclose the TRAM domain.

This sequence belongs to the methylthiotransferase family. MiaB subfamily. In terms of assembly, monomer. The cofactor is [4Fe-4S] cluster.

It is found in the cytoplasm. The catalysed reaction is N(6)-dimethylallyladenosine(37) in tRNA + (sulfur carrier)-SH + AH2 + 2 S-adenosyl-L-methionine = 2-methylsulfanyl-N(6)-dimethylallyladenosine(37) in tRNA + (sulfur carrier)-H + 5'-deoxyadenosine + L-methionine + A + S-adenosyl-L-homocysteine + 2 H(+). Catalyzes the methylthiolation of N6-(dimethylallyl)adenosine (i(6)A), leading to the formation of 2-methylthio-N6-(dimethylallyl)adenosine (ms(2)i(6)A) at position 37 in tRNAs that read codons beginning with uridine. This Geobacter metallireducens (strain ATCC 53774 / DSM 7210 / GS-15) protein is tRNA-2-methylthio-N(6)-dimethylallyladenosine synthase.